A 245-amino-acid chain; its full sequence is Orotidine 5'-phosphate decarboxylase (245 aa).

Residues aspartate 22, lysine 44, 71-80 (DLKFHDIPNT), threonine 131, arginine 192, glutamine 201, glycine 221, and arginine 222 each bind substrate. Lysine 73 serves as the catalytic Proton donor.

Belongs to the OMP decarboxylase family. Type 1 subfamily. As to quaternary structure, homodimer.

It catalyses the reaction orotidine 5'-phosphate + H(+) = UMP + CO2. The protein operates within pyrimidine metabolism; UMP biosynthesis via de novo pathway; UMP from orotate: step 2/2. Its function is as follows. Catalyzes the decarboxylation of orotidine 5'-monophosphate (OMP) to uridine 5'-monophosphate (UMP). The sequence is that of Orotidine 5'-phosphate decarboxylase from Escherichia fergusonii (strain ATCC 35469 / DSM 13698 / CCUG 18766 / IAM 14443 / JCM 21226 / LMG 7866 / NBRC 102419 / NCTC 12128 / CDC 0568-73).